We begin with the raw amino-acid sequence, 249 residues long: Undecaprenyl-diphosphatase (249 aa).

A run of 8 helical transmembrane segments spans residues 11-31, 35-55, 74-94, 101-121, 135-155, 175-195, 208-228, and 229-249; these read GLTEFLPVSSSGHLAIFTAIF, PDVGYFAFLHLATFLAVVIFV, ITLSLKLFVSMIPAAIVGIFF, IFSETFFIGVFLAITGVFMLL, IPYLDAFIIGIFQAFSVLPGI, AVKYSFLMSLPVIFGAGVLEM, FIVAFLTGILGLHLLKKMVIA, and GKLKFFGYYCFLASLFVIFYI.

The protein belongs to the UppP family.

It localises to the cell membrane. The enzyme catalyses di-trans,octa-cis-undecaprenyl diphosphate + H2O = di-trans,octa-cis-undecaprenyl phosphate + phosphate + H(+). Catalyzes the dephosphorylation of undecaprenyl diphosphate (UPP). This is Undecaprenyl-diphosphatase from Methanococcus vannielii (strain ATCC 35089 / DSM 1224 / JCM 13029 / OCM 148 / SB).